An 877-amino-acid chain; its full sequence is Alanine--tRNA ligase (877 aa).

Zn(2+)-binding residues include His-561, His-565, Cys-669, and His-673.

The protein belongs to the class-II aminoacyl-tRNA synthetase family. The cofactor is Zn(2+).

The protein localises to the cytoplasm. It catalyses the reaction tRNA(Ala) + L-alanine + ATP = L-alanyl-tRNA(Ala) + AMP + diphosphate. Its function is as follows. Catalyzes the attachment of alanine to tRNA(Ala) in a two-step reaction: alanine is first activated by ATP to form Ala-AMP and then transferred to the acceptor end of tRNA(Ala). Also edits incorrectly charged Ser-tRNA(Ala) and Gly-tRNA(Ala) via its editing domain. This Endomicrobium trichonymphae protein is Alanine--tRNA ligase.